The following is a 184-amino-acid chain: Gastrokine-2 (184 aa).

Residues 1–20 (MKSLVAFLVVLSILRIQSQA) form the signal peptide. Positions 54–151 (HSGSCSSTTI…LCKHIPLYEG (98 aa)) constitute a BRICHOS domain. Cysteines 81 and 143 form a disulfide.

Heterodimer with TFF1; disulfide linked. Interacts with TFF2.

The protein localises to the secreted. The polypeptide is Gastrokine-2 (Gkn2) (Rattus norvegicus (Rat)).